Consider the following 557-residue polypeptide: 2-isopropylmalate synthase (557 aa).

In terms of domain architecture, Pyruvate carboxyltransferase spans 33–307 (PIWCSSDLRD…DPQLDFSDID (275 aa)). Residues Asp-42, His-246, His-248, and Asn-282 each coordinate Mg(2+). The regulatory domain stretch occupies residues 439-557 (ANSPYALVSH…SLSQQEAKAA (119 aa)).

This sequence belongs to the alpha-IPM synthase/homocitrate synthase family. LeuA type 2 subfamily. In terms of assembly, homodimer. It depends on Mg(2+) as a cofactor.

Its subcellular location is the cytoplasm. It carries out the reaction 3-methyl-2-oxobutanoate + acetyl-CoA + H2O = (2S)-2-isopropylmalate + CoA + H(+). The protein operates within amino-acid biosynthesis; L-leucine biosynthesis; L-leucine from 3-methyl-2-oxobutanoate: step 1/4. In terms of biological role, catalyzes the condensation of the acetyl group of acetyl-CoA with 3-methyl-2-oxobutanoate (2-ketoisovalerate) to form 3-carboxy-3-hydroxy-4-methylpentanoate (2-isopropylmalate). In Pseudomonas putida (strain W619), this protein is 2-isopropylmalate synthase.